Consider the following 78-residue polypeptide: Large ribosomal subunit protein bL28 (78 aa).

The protein belongs to the bacterial ribosomal protein bL28 family.

The sequence is that of Large ribosomal subunit protein bL28 from Edwardsiella ictaluri (strain 93-146).